The primary structure comprises 155 residues: Protein FAM163B (155 aa).

The helical transmembrane segment at 6–26 (VVITGGILATVILLCIIAVLC) threads the bilayer.

The protein belongs to the FAM163 family.

The protein resides in the membrane. This is Protein FAM163B (fam163b) from Xenopus tropicalis (Western clawed frog).